The chain runs to 353 residues: Alanine racemase (353 aa).

The active-site Proton acceptor; specific for D-alanine is the Lys-33. Lys-33 bears the N6-(pyridoxal phosphate)lysine mark. Arg-129 is a binding site for substrate. Tyr-250 serves as the catalytic Proton acceptor; specific for L-alanine. Met-298 contacts substrate.

It belongs to the alanine racemase family. Pyridoxal 5'-phosphate serves as cofactor.

The enzyme catalyses L-alanine = D-alanine. Its pathway is amino-acid biosynthesis; D-alanine biosynthesis; D-alanine from L-alanine: step 1/1. In terms of biological role, catalyzes the interconversion of L-alanine and D-alanine. May also act on other amino acids. The chain is Alanine racemase (alr) from Azoarcus sp. (strain BH72).